Reading from the N-terminus, the 948-residue chain is Zinc finger CCCH domain-containing protein 18 (948 aa).

Methionine 1 is subject to N-acetylmethionine. Positions methionine 1 to threonine 219 are disordered. Serine 6 is subject to Phosphoserine. Acidic residues predominate over residues glutamate 15–aspartate 25. 8 positions are modified to phosphoserine: serine 33, serine 45, serine 58, serine 64, serine 71, serine 75, serine 80, and serine 92. The span at alanine 70–serine 86 shows a compositional bias: basic and acidic residues. The segment covering glutamate 95–threonine 105 has biased composition (acidic residues). Threonine 105 is subject to Phosphothreonine. A phosphoserine mark is found at serine 106 and serine 114. Residues serine 106–aspartate 120 are compositionally biased toward basic and acidic residues. 2 stretches are compositionally biased toward acidic residues: residues glutamate 121–glutamate 132 and glutamine 139–lysine 154. Serine 169 is subject to Phosphoserine. Positions glutamate 177–aspartate 186 are enriched in basic and acidic residues. Acidic residues predominate over residues aspartate 187–glutamate 203. The span at glycine 204–lysine 213 shows a compositional bias: basic and acidic residues. The C3H1-type zinc-finger motif lies at arginine 215–valine 241. Glycine 245 is modified (omega-N-methylarginine). Disordered stretches follow at residues alanine 272–alanine 296 and tyrosine 388–arginine 922. Basic and acidic residues predominate over residues glutamate 392–lysine 480. Residues histidine 395–aspartate 460 adopt a coiled-coil conformation. At serine 483 the chain carries Phosphoserine. Lysine 506 is covalently cross-linked (Glycyl lysine isopeptide (Lys-Gly) (interchain with G-Cter in SUMO2)). The span at lysine 506 to arginine 516 shows a compositional bias: basic and acidic residues. Phosphoserine is present on residues serine 528, serine 530, and serine 532. The segment covering serine 541–proline 602 has biased composition (low complexity). Residues serine 603–arginine 612 are compositionally biased toward pro residues. Residues lysine 618 and lysine 657 each participate in a glycyl lysine isopeptide (Lys-Gly) (interchain with G-Cter in SUMO2) cross-link. The span at lysine 657–arginine 666 shows a compositional bias: basic and acidic residues. Low complexity-rich tracts occupy residues glycine 688 to serine 721 and alanine 732 to alanine 746. The span at lysine 756–proline 770 shows a compositional bias: basic and acidic residues. A compositionally biased stretch (low complexity) spans proline 774 to glycine 804. Lysine 810 carries the N6-acetyllysine modification. Lysine 813 is covalently cross-linked (Glycyl lysine isopeptide (Lys-Gly) (interchain with G-Cter in SUMO2)). The span at alanine 820–glutamine 837 shows a compositional bias: basic and acidic residues. Phosphoserine is present on residues serine 838, serine 847, serine 863, serine 888, and serine 891. Polar residues predominate over residues serine 888–threonine 898. The segment covering glycine 902–threonine 919 has biased composition (low complexity). Lysine 903 is covalently cross-linked (Glycyl lysine isopeptide (Lys-Gly) (interchain with G-Cter in SUMO2)). Residues lysine 916 to proline 945 are a coiled coil.

In terms of assembly, interacts with ZFC3H1 in a RNase-insensitive manner.

Its subcellular location is the nucleus. In Mus musculus (Mouse), this protein is Zinc finger CCCH domain-containing protein 18 (Zc3h18).